The sequence spans 33 residues: Pardaxin P-1 (33 aa).

This sequence belongs to the pardaxin family. In terms of assembly, in aqueous solution exists as a tetramer.

The protein resides in the secreted. It is found in the target cell membrane. In terms of biological role, exhibits unusual shark repellent and surfactant properties. Forms voltage-dependent, ion-permeable channels in membranes. At high concentration causes cell membrane lysis. Causes death in killfish oryzias latipes in 30 minutes at a concentration of 25 micrograms/ml. The chain is Pardaxin P-1 from Pardachirus pavoninus (Peacock sole).